The following is a 779-amino-acid chain: Filament-like plant protein 1 (779 aa).

The span at 1 to 14 shows a compositional bias: basic and acidic residues; sequence MEKRKRESSERSFG. Disordered stretches follow at residues 1–55, 253–274, and 315–336; these read MEKR…ETEK, ASFN…MDVS, and PETP…VVVP. A coiled-coil region spans residues 47-200; that stretch reads VSLEVETEKE…KENVMLRHEL (154 aa). The span at 256 to 272 shows a compositional bias: basic and acidic residues; that stretch reads NDHRSTDSHSDGGERMD. A compositionally biased stretch (low complexity) spans 324-336; that stretch reads SGPESVTEEVVVP. Positions 337 to 674 form a coiled coil; sequence SENSLASEIE…ANCQKTIASL (338 aa). The segment covering 718-731 has biased composition (basic and acidic residues); the sequence is FMTRNHPESIKPTK. The segment at 718-764 is disordered; that stretch reads FMTRNHPESIKPTKETSPSSSSSTASAAVSMPVSTNRGSSEKNRNGF. Over residues 733 to 752 the composition is skewed to low complexity; sequence TSPSSSSSTASAAVSMPVST.

Belongs to the FPP family. In terms of assembly, interacts with WPP/MAF proteins.

This Arabidopsis thaliana (Mouse-ear cress) protein is Filament-like plant protein 1 (FPP1).